The following is a 451-amino-acid chain: uncharacterized protein (451 aa).

The segment at 1 to 451 is disordered; the sequence is MSETENKTTT…KKEAAKNKSK (451 aa). The span at 9–22 shows a compositional bias: low complexity; it reads TTETPTTTDSTVTT. Residues 44–54 show a composition bias toward polar residues; sequence VKNQLSNTRTR. A compositionally biased stretch (basic and acidic residues) spans 73-99; it reads KLIDTKERKEKKEKKEKEPKEPKEPKE. Residues 114 to 147 show a composition bias toward acidic residues; it reads GDEEEDEEKEEDEEQKEEQSQEEDSEESEEEQNS. Positions 152–162 are enriched in basic residues; sequence KKKKKQAKKVA. Composition is skewed to basic and acidic residues over residues 163–192, 199–210, and 217–230; these read KKET…EKEA, STEKKEKEEKPK, and KKDQ…KDGD. The segment covering 232-244 has biased composition (low complexity); that stretch reads STTTTATATTTTD. Composition is skewed to basic and acidic residues over residues 284–303 and 311–340; these read TEEK…ETKK and AAAE…DDKP. The span at 341-355 shows a compositional bias: low complexity; the sequence is AATTTTTTAAAATTT. A compositionally biased stretch (basic and acidic residues) spans 356 to 383; sequence EEPKEKITKPAADKKKAPANKKAEKDQS. Over residues 393–425 the composition is skewed to low complexity; it reads TTTATTTTTNKDATAPTTTTNKDATAPTTTTTK. Residues 441-451 show a composition bias toward basic and acidic residues; the sequence is PKKEAAKNKSK.

This is an uncharacterized protein from Dictyostelium discoideum (Social amoeba).